Reading from the N-terminus, the 125-residue chain is Large ribosomal subunit protein bL12 (125 aa).

It belongs to the bacterial ribosomal protein bL12 family. In terms of assembly, homodimer. Part of the ribosomal stalk of the 50S ribosomal subunit. Forms a multimeric L10(L12)X complex, where L10 forms an elongated spine to which 2 to 4 L12 dimers bind in a sequential fashion. Binds GTP-bound translation factors.

Forms part of the ribosomal stalk which helps the ribosome interact with GTP-bound translation factors. Is thus essential for accurate translation. The polypeptide is Large ribosomal subunit protein bL12 (Methylorubrum extorquens (strain CM4 / NCIMB 13688) (Methylobacterium extorquens)).